The primary structure comprises 403 residues: MQSIKRTLLLLGALLPAALAAPAREPHPSSNIIPGKYIITFKSGIDTAAIESHTAWASNIHKRNLERRGLVGGEFPAGIERKFKIKDFAAYAGSFDPATIEEIRNSEDVAHVEEDQIWYLDALTTQSGAPWGLGSISHKGQASTNYVYDTSAGAGTYAYVVDSGINVDHIEFQGRATKAYNAVGGDHVDTLGHGTHVAGTIGGKTYGVAKQTNLLSVKVFEGRTGSTSVILDGFNWAANDIVSKGRKGKAAINMSLGGGYSYAFNNAVESAYEQGVLSVVAAGNEGVDASNSSPASAPNALTVGATNKSNARASFSNYGKVLDIFAPGQDILSAWIGSTTATNTISGTSMATPHVVGLAVYLMGLEGVSGPAAVTQRILQLATSGVISDVKGSPNKLAYNGAA.

An N-terminal signal peptide occupies residues 1–21 (MQSIKRTLLLLGALLPAALAA). Positions 22–125 (PAREPHPSSN…QIWYLDALTT (104 aa)) are excised as a propeptide. Residues 36-120 (KYIITFKSGI…HVEEDQIWYL (85 aa)) form the Inhibitor I9 domain. One can recognise a Peptidase S8 domain in the interval 130 to 403 (PWGLGSISHK…PNKLAYNGAA (274 aa)). Residues aspartate 162 and histidine 193 each act as charge relay system in the active site. Asparagine 253 and asparagine 307 each carry an N-linked (GlcNAc...) asparagine glycan. The Charge relay system role is filled by serine 349.

This sequence belongs to the peptidase S8 family.

The protein resides in the secreted. The catalysed reaction is Hydrolysis of proteins with broad specificity, and of Bz-Arg-OEt &gt; Ac-Tyr-OEt. Does not hydrolyze peptide amides.. Its function is as follows. Secreted alkaline protease that allows assimilation of proteinaceous substrates. The chain is Alkaline protease 1 (alp1) from Aspergillus clavatus (strain ATCC 1007 / CBS 513.65 / DSM 816 / NCTC 3887 / NRRL 1 / QM 1276 / 107).